Here is an 823-residue protein sequence, read N- to C-terminus: Nuclear factor I family protein (823 aa).

A disordered region spans residues 1-56 (MEPHLKIDVSSASGSTTTGATASTSEAPQDSQAQQTMPPPSSDWSNQFNSPEAVSP). Over residues 10–25 (SSASGSTTTGATASTS) the composition is skewed to low complexity. The span at 26 to 52 (EAPQDSQAQQTMPPPSSDWSNQFNSPE) shows a compositional bias: polar residues. The segment at residues 61–253 (IKCFSPYSQE…DVDTKITLTY (193 aa)) is a DNA-binding region (CTF/NF-I). Disordered stretches follow at residues 364–408 (PYPI…NDEV), 433–468 (SRTQQNQGAPGTSRQVRPLPDFQSQDSARSPGAFRS), and 777–823 (APPA…NEKK). Over residues 386–396 (PSEKRSRDISS) the composition is skewed to basic and acidic residues. Over residues 433 to 447 (SRTQQNQGAPGTSRQ) the composition is skewed to polar residues. Positions 777–794 (APPACSPSSSNSSLGAAN) are enriched in low complexity.

The protein belongs to the CTF/NF-I family. In terms of tissue distribution, expressed in muscles, neurons and intestinal cells.

It is found in the nucleus. Probable transcription factor which recognizes and binds the palindromic sequence 5'-TTGGCANNNTGCCAA-3' present in promoters. Plays a role in locomotion, pharyngeal pumping, egg-laying, and life span. The chain is Nuclear factor I family protein from Caenorhabditis elegans.